The chain runs to 109 residues: Large ribosomal subunit protein uL22 (109 aa).

Belongs to the universal ribosomal protein uL22 family. In terms of assembly, part of the 50S ribosomal subunit.

Its function is as follows. This protein binds specifically to 23S rRNA; its binding is stimulated by other ribosomal proteins, e.g. L4, L17, and L20. It is important during the early stages of 50S assembly. It makes multiple contacts with different domains of the 23S rRNA in the assembled 50S subunit and ribosome. In terms of biological role, the globular domain of the protein is located near the polypeptide exit tunnel on the outside of the subunit, while an extended beta-hairpin is found that lines the wall of the exit tunnel in the center of the 70S ribosome. This Paraburkholderia xenovorans (strain LB400) protein is Large ribosomal subunit protein uL22.